Here is a 255-residue protein sequence, read N- to C-terminus: tRNA pseudouridine synthase A (255 aa).

Asp43 acts as the Nucleophile in catalysis. Tyr94 contributes to the substrate binding site.

Belongs to the tRNA pseudouridine synthase TruA family.

It carries out the reaction uridine(38/39/40) in tRNA = pseudouridine(38/39/40) in tRNA. In terms of biological role, formation of pseudouridine at positions 38, 39 and 40 in the anticodon stem and loop of transfer RNAs. The chain is tRNA pseudouridine synthase A from Pyrobaculum islandicum (strain DSM 4184 / JCM 9189 / GEO3).